A 402-amino-acid polypeptide reads, in one-letter code: uncharacterized protein (402 aa).

Helical transmembrane passes span Ile13–Ala33, Phe68–Val88, Leu108–Leu128, Leu149–Phe169, Leu223–Ala243, Leu261–Lys281, Ile283–Leu303, Tyr327–Gly347, and Ala353–Leu373.

It localises to the cell membrane. Involved in transport. This is an uncharacterized protein from Bacillus subtilis (strain 168).